Here is a 147-residue protein sequence, read N- to C-terminus: Deoxyuridine 5'-triphosphate nucleotidohydrolase (147 aa).

A Mg(2+)-binding site is contributed by arginine 24. Residues 68 to 70 (PRS), 82 to 85 (GVID), tyrosine 88, glycine 93, isoleucine 95, and arginine 111 each bind dUTP.

This sequence belongs to the dUTPase family.

It catalyses the reaction dUTP + H2O = dUMP + diphosphate + H(+). In terms of biological role, this enzyme is involved in nucleotide metabolism: it produces dUMP, the immediate precursor of thymidine nucleotides and it decreases the intracellular concentration of dUTP so that uracil cannot be incorporated into DNA. This Homo sapiens (Human) protein is Deoxyuridine 5'-triphosphate nucleotidohydrolase (OPG046).